Consider the following 532-residue polypeptide: 2-isopropylmalate synthase (532 aa).

A Pyruvate carboxyltransferase domain is found at 5–267 (VIIFDTTLRD…HTNINHQEIY (263 aa)). The Mn(2+) site is built by Asp-14, His-202, His-204, and Asn-238. Residues 392–532 (HLDYFSVQSG…SKQQNSQETV (141 aa)) are regulatory domain. Residues 513 to 532 (QQHNNQQQNDSKQQNSQETV) are disordered.

It belongs to the alpha-IPM synthase/homocitrate synthase family. LeuA type 1 subfamily. As to quaternary structure, homodimer. Mn(2+) is required as a cofactor.

It is found in the cytoplasm. The catalysed reaction is 3-methyl-2-oxobutanoate + acetyl-CoA + H2O = (2S)-2-isopropylmalate + CoA + H(+). It participates in amino-acid biosynthesis; L-leucine biosynthesis; L-leucine from 3-methyl-2-oxobutanoate: step 1/4. Its function is as follows. Catalyzes the condensation of the acetyl group of acetyl-CoA with 3-methyl-2-oxobutanoate (2-ketoisovalerate) to form 3-carboxy-3-hydroxy-4-methylpentanoate (2-isopropylmalate). This chain is 2-isopropylmalate synthase, found in Pectobacterium atrosepticum (strain SCRI 1043 / ATCC BAA-672) (Erwinia carotovora subsp. atroseptica).